The following is a 423-amino-acid chain: Probable sodium/metabolite cotransporter BASS3, chloroplastic (423 aa).

A chloroplast-targeting transit peptide spans 1-45 (MAAAVAASSSSSSSSCAAVGVATASHPHRHRQARFVVSPPAPASP). A run of 9 helical transmembrane segments spans residues 106 to 126 (ALLPLVVAATAVAALGNPATF), 138 to 158 (LGGIMLSIGIKLSIDDFALAF), 165 to 187 (TIGYMAQYIVKPLMGVLIARAFG), 192 to 214 (FFAGFVLTCCVSGAQLSSYASFL), 231 to 251 (ISSVVVTPVLTGLLIGSVVPV), 254 to 274 (IAMAKSILQVVLVPVTLGLLL), 287 to 307 (PVMPFVAMLCTSLCIGSPLAI), 318 to 338 (FLLLLPIVTFHIAAFIVGYWI), and 380 to 400 (VPAACSVVIMAIFGLTLASYW).

Belongs to the bile acid:sodium symporter (BASS) (TC 2.A.28) family.

It localises to the membrane. Its subcellular location is the plastid. The protein localises to the chloroplast envelope. In terms of biological role, may function as sodium-coupled metabolite transporter across the chloroplast envelope. The chain is Probable sodium/metabolite cotransporter BASS3, chloroplastic (BASS3) from Oryza sativa subsp. japonica (Rice).